Here is a 132-residue protein sequence, read N- to C-terminus: Small ribosomal subunit protein uS8 (132 aa).

It belongs to the universal ribosomal protein uS8 family. Part of the 30S ribosomal subunit. Contacts proteins S5 and S12.

Its function is as follows. One of the primary rRNA binding proteins, it binds directly to 16S rRNA central domain where it helps coordinate assembly of the platform of the 30S subunit. The polypeptide is Small ribosomal subunit protein uS8 (Stenotrophomonas maltophilia (strain R551-3)).